Consider the following 411-residue polypeptide: Snake venom metalloproteinase VMP1 (411 aa).

The first 20 residues, 1–20 (MIQVLLVTICLAAFPYQGSS), serve as a signal peptide directing secretion. Positions 21–189 (IILESGNVND…KKAFQLNLTP (169 aa)) are excised as a propeptide. Positions 197–393 (RYVELVIIAD…KNPQCILNKP (197 aa)) constitute a Peptidase M12B domain. The Ca(2+) site is built by Glu-200 and Asp-284. Intrachain disulfides connect Cys-308–Cys-388, Cys-348–Cys-372, and Cys-350–Cys-355. An N-linked (GlcNAc...) asparagine glycan is attached at Asn-311. Residue His-333 coordinates Zn(2+). Residue Glu-334 is part of the active site. His-337 and His-343 together coordinate Zn(2+). Positions 388, 391, 403, 406, 408, and 410 each coordinate Ca(2+).

The protein belongs to the venom metalloproteinase (M12B) family. P-I subfamily. As to quaternary structure, monomer. Requires Zn(2+) as cofactor. As to expression, expressed by the venom gland.

Its subcellular location is the secreted. Inhibited by EDTA and 1,10-phenanthroline, but not by PMSF. This venom zinc protease has fibrinolytic activity. The recombinant enzyme cleaves both alpha- (FGA) and beta-chains (FGB) of fibrinogen, but not the gamma-chain. The recombinant protein does not produce hemorrhage in mice and does not have effect on ADP- or collagen-stimulated platelet aggregation. In Agkistrodon piscivorus leucostoma (Western cottonmouth), this protein is Snake venom metalloproteinase VMP1.